The following is a 92-amino-acid chain: Defensin alpha 4 (92 aa).

Residues 1 to 19 (MKTLVLLSALVLLAFQVQA) form the signal peptide. The propeptide occupies 20 to 58 (DPIQNTDEETKTEEQPGEEDQAVSISFGGQEGSALHEKS). Positions 23–42 (QNTDEETKTEEQPGEEDQAV) are disordered. Cystine bridges form between cysteine 64–cysteine 89, cysteine 66–cysteine 81, and cysteine 71–cysteine 88.

The protein belongs to the alpha-defensin family. In terms of tissue distribution, paneth cells of the small bowel.

The protein resides in the secreted. It is found in the cytoplasmic vesicle. Its subcellular location is the secretory vesicle. Its function is as follows. Host-defense peptide that has antimicrobial activity. Exhibits activity against Gram-negative E.coli (in vitro). Probably contributes to the antimicrobial barrier function of the small bowel mucosa. In Mus musculus (Mouse), this protein is Defensin alpha 4.